A 179-amino-acid chain; its full sequence is MSLKQRYRETIQPKLLKDLSLSNIHEVPKVLKITVNRGLGEAAQNAKSLEASITELATITGQKVVVTRAKKAIAGFKIRQGMPIGCAVTLRGERMYAFLERLINLALPRIRDFRGVSPKSFDGRGNYTLGVREQLIFPEVSFDKIDAIRGMDITIVTSARTDEEGQSLLREMGMPFRSN.

This sequence belongs to the universal ribosomal protein uL5 family. Part of the 50S ribosomal subunit; part of the 5S rRNA/L5/L18/L25 subcomplex. Contacts the 5S rRNA and the P site tRNA. Forms a bridge to the 30S subunit in the 70S ribosome.

This is one of the proteins that bind and probably mediate the attachment of the 5S RNA into the large ribosomal subunit, where it forms part of the central protuberance. In the 70S ribosome it contacts protein S13 of the 30S subunit (bridge B1b), connecting the 2 subunits; this bridge is implicated in subunit movement. Contacts the P site tRNA; the 5S rRNA and some of its associated proteins might help stabilize positioning of ribosome-bound tRNAs. The chain is Large ribosomal subunit protein uL5 from Prochlorococcus marinus (strain MIT 9303).